Reading from the N-terminus, the 340-residue chain is Phosphoribosylformylglycinamidine cyclo-ligase (340 aa).

This sequence belongs to the AIR synthase family.

The protein resides in the cytoplasm. The enzyme catalyses 2-formamido-N(1)-(5-O-phospho-beta-D-ribosyl)acetamidine + ATP = 5-amino-1-(5-phospho-beta-D-ribosyl)imidazole + ADP + phosphate + H(+). Its pathway is purine metabolism; IMP biosynthesis via de novo pathway; 5-amino-1-(5-phospho-D-ribosyl)imidazole from N(2)-formyl-N(1)-(5-phospho-D-ribosyl)glycinamide: step 2/2. In Streptococcus pyogenes serotype M28 (strain MGAS6180), this protein is Phosphoribosylformylglycinamidine cyclo-ligase.